The chain runs to 364 residues: tRNA/tmRNA (uracil-C(5))-methyltransferase (364 aa).

S-adenosyl-L-methionine contacts are provided by Gln189, Tyr216, Asn221, Glu237, and Asp297. The Nucleophile role is filled by Cys322. Glu356 serves as the catalytic Proton acceptor.

It belongs to the class I-like SAM-binding methyltransferase superfamily. RNA M5U methyltransferase family. TrmA subfamily.

The enzyme catalyses uridine(54) in tRNA + S-adenosyl-L-methionine = 5-methyluridine(54) in tRNA + S-adenosyl-L-homocysteine + H(+). It carries out the reaction uridine(341) in tmRNA + S-adenosyl-L-methionine = 5-methyluridine(341) in tmRNA + S-adenosyl-L-homocysteine + H(+). Functionally, dual-specificity methyltransferase that catalyzes the formation of 5-methyluridine at position 54 (m5U54) in all tRNAs, and that of position 341 (m5U341) in tmRNA (transfer-mRNA). The sequence is that of tRNA/tmRNA (uracil-C(5))-methyltransferase from Campylobacter curvus (strain 525.92).